We begin with the raw amino-acid sequence, 353 residues long: MTMDNPKVEQAGHAVDSAKLKQLNLAVDALEKQFGKGTIMRMGDGSAGLTVQAISTGSMALDFALGVGGLPRGRVTEIYGPESSGKTTLALHVIAEAQKEGGITAIVDAEHAFDPSYARKLGVDINALLISQPESGEQALSIVETLVRSGAVDVVVVDSVAALVPQAELEGEMGDSSMGLQARLMSQALRKLTGAISKSSTVCIFINQLRDKIGVMYGSPETTTGGKALKFYSSVRLDIRKIAQLKDGDELTGSRTRVKVVKNKVAPPFKMAEFDILYGEGISALGELIDLGVEFGVIKKAGSWFSYGTEKLGQGRESVKKILREDPVLYQKIHMQVKELMTGHTEIISSPTE.

Position 80–87 (80–87 (GPESSGKT)) interacts with ATP.

Belongs to the RecA family.

The protein resides in the cytoplasm. Can catalyze the hydrolysis of ATP in the presence of single-stranded DNA, the ATP-dependent uptake of single-stranded DNA by duplex DNA, and the ATP-dependent hybridization of homologous single-stranded DNAs. It interacts with LexA causing its activation and leading to its autocatalytic cleavage. The sequence is that of Protein RecA from Chlorobium chlorochromatii (strain CaD3).